Consider the following 1368-residue polypeptide: DNA-directed RNA polymerase subunit beta (1368 aa).

This sequence belongs to the RNA polymerase beta chain family. The RNAP catalytic core consists of 2 alpha, 1 beta, 1 beta' and 1 omega subunit. When a sigma factor is associated with the core the holoenzyme is formed, which can initiate transcription.

It carries out the reaction RNA(n) + a ribonucleoside 5'-triphosphate = RNA(n+1) + diphosphate. DNA-dependent RNA polymerase catalyzes the transcription of DNA into RNA using the four ribonucleoside triphosphates as substrates. The polypeptide is DNA-directed RNA polymerase subunit beta (Cupriavidus metallidurans (strain ATCC 43123 / DSM 2839 / NBRC 102507 / CH34) (Ralstonia metallidurans)).